Consider the following 238-residue polypeptide: Uridylate kinase (238 aa).

Residue 12-15 (KLSG) participates in ATP binding. G54 lines the UMP pocket. Residues G55 and R59 each coordinate ATP. UMP is bound by residues D74 and 135 to 142 (TGNPYFTT). The ATP site is built by T162, N163, Y168, and D171.

Belongs to the UMP kinase family. In terms of assembly, homohexamer.

It localises to the cytoplasm. It carries out the reaction UMP + ATP = UDP + ADP. It participates in pyrimidine metabolism; CTP biosynthesis via de novo pathway; UDP from UMP (UMPK route): step 1/1. Its activity is regulated as follows. Inhibited by UTP. Its function is as follows. Catalyzes the reversible phosphorylation of UMP to UDP. The protein is Uridylate kinase of Bradyrhizobium sp. (strain ORS 278).